Reading from the N-terminus, the 179-residue chain is Small hydrophobic protein (179 aa).

At 1–29 the chain is on the intravirion side; sequence MITLDVIKSDGSSKTCTHLKKIIKDHSGK. The helical; Signal-anchor for type II membrane protein transmembrane segment at 30–50 threads the bilayer; that stretch reads VLIALKLILALLTFFTITITI. Residues 51–179 are Virion surface-facing; that stretch reads NYIKVENNLQ…EWKCYHHSID (129 aa). N-linked (GlcNAc...) asparagine; by host glycosylation is found at Asn76, Asn121, and Asn149.

It belongs to the metapneumovirus small hydrophobic protein family. In terms of assembly, homooligomer. Interacts with glycoprotein G.

The protein resides in the virion membrane. Its subcellular location is the host cell membrane. Viroporin that forms a ion channel probably displaying low ion selectivity. Plays a role in counteracting host innate immunity by inhibiting TLR7/MyD88/TRAF6 signaling and STAT1 phosphorylation, leading to down-regulation of type-I IFN. This chain is Small hydrophobic protein (SH), found in Homo sapiens (Human).